The following is a 104-amino-acid chain: Large ribosomal subunit protein uL24 (104 aa).

This sequence belongs to the universal ribosomal protein uL24 family. As to quaternary structure, part of the 50S ribosomal subunit.

Its function is as follows. One of two assembly initiator proteins, it binds directly to the 5'-end of the 23S rRNA, where it nucleates assembly of the 50S subunit. In terms of biological role, one of the proteins that surrounds the polypeptide exit tunnel on the outside of the subunit. The polypeptide is Large ribosomal subunit protein uL24 (Cronobacter sakazakii (strain ATCC BAA-894) (Enterobacter sakazakii)).